A 205-amino-acid polypeptide reads, in one-letter code: Urease accessory protein UreE (205 aa).

Residues 171-205 are disordered; that stretch reads AHEAHPHAHSHAGGHGHVHSGHGHGGKHGEHDAES. Residues 177–196 are compositionally biased toward basic residues; sequence HAHSHAGGHGHVHSGHGHGG.

It belongs to the UreE family.

It is found in the cytoplasm. Its function is as follows. Involved in urease metallocenter assembly. Binds nickel. Probably functions as a nickel donor during metallocenter assembly. This is Urease accessory protein UreE from Bordetella bronchiseptica (strain ATCC BAA-588 / NCTC 13252 / RB50) (Alcaligenes bronchisepticus).